The primary structure comprises 338 residues: Ketol-acid reductoisomerase (NADP(+)) (338 aa).

A KARI N-terminal Rossmann domain is found at 3–183 (IDVFYDDDAD…GGARAGVIPT (181 aa)). Residues 26 to 29 (YGSQ), Arg49, Ser52, Ser54, and 84 to 87 (DTSQ) contribute to the NADP(+) site. His109 is a catalytic residue. Gly135 is a binding site for NADP(+). A KARI C-terminal knotted domain is found at 184-329 (TFEAETVTDL…AKLRDLMSWV (146 aa)). Mg(2+) contacts are provided by Asp192, Glu196, Glu228, and Glu232. Ser253 serves as a coordination point for substrate.

Belongs to the ketol-acid reductoisomerase family. Mg(2+) serves as cofactor.

It carries out the reaction (2R)-2,3-dihydroxy-3-methylbutanoate + NADP(+) = (2S)-2-acetolactate + NADPH + H(+). The enzyme catalyses (2R,3R)-2,3-dihydroxy-3-methylpentanoate + NADP(+) = (S)-2-ethyl-2-hydroxy-3-oxobutanoate + NADPH + H(+). It functions in the pathway amino-acid biosynthesis; L-isoleucine biosynthesis; L-isoleucine from 2-oxobutanoate: step 2/4. It participates in amino-acid biosynthesis; L-valine biosynthesis; L-valine from pyruvate: step 2/4. Involved in the biosynthesis of branched-chain amino acids (BCAA). Catalyzes an alkyl-migration followed by a ketol-acid reduction of (S)-2-acetolactate (S2AL) to yield (R)-2,3-dihydroxy-isovalerate. In the isomerase reaction, S2AL is rearranged via a Mg-dependent methyl migration to produce 3-hydroxy-3-methyl-2-ketobutyrate (HMKB). In the reductase reaction, this 2-ketoacid undergoes a metal-dependent reduction by NADPH to yield (R)-2,3-dihydroxy-isovalerate. This Corynebacterium jeikeium (strain K411) protein is Ketol-acid reductoisomerase (NADP(+)).